The primary structure comprises 602 residues: Beta-(1--&gt;2)glucan export ATP-binding/permease protein NdvA (602 aa).

Residues 21–311 enclose the ABC transmembrane type-1 domain; the sequence is GWTLAVANLL…VVSFVNSLMM (291 aa). A run of 6 helical transmembrane segments spans residues 22–42, 68–88, 146–166, 167–187, 254–274, and 276–296; these read WTLAVANLLLATAQFAEPVLF, LLAAWVGFGLFTILCSATVAL, EHFAAILSLVVLLPLSLYINW, RLAILLFALCGVFTVLTTLVV, VITRASTTITVLAIFSLGIAL, and QQGLTSVGEIVMFVSFATLLI. One can recognise an ABC transporter domain in the interval 345–579; that stretch reads VEFLDVSFSY…RGRFAELARA (235 aa). An ATP-binding site is contributed by 378–385; it reads GATGAGKS.

It belongs to the ABC transporter superfamily. Beta-(1--&gt;2)glucan exporter (TC 3.A.1.108.1) family. Homodimer.

It is found in the cell inner membrane. The enzyme catalyses [(1-&gt;2)-beta-D-glucosyl](n)(in) + ATP + H2O = [(1-&gt;2)-beta-D-glucosyl](n)(out) + ADP + phosphate + H(+). Involved in beta-(1--&gt;2)glucan export. Transmembrane domains (TMD) form a pore in the inner membrane and the ATP-binding domain (NBD) is responsible for energy generation. The protein is Beta-(1--&gt;2)glucan export ATP-binding/permease protein NdvA of Rhodopseudomonas palustris (strain BisB5).